We begin with the raw amino-acid sequence, 419 residues long: Histidine--tRNA ligase (419 aa).

The protein belongs to the class-II aminoacyl-tRNA synthetase family. In terms of assembly, homodimer.

It is found in the cytoplasm. It catalyses the reaction tRNA(His) + L-histidine + ATP = L-histidyl-tRNA(His) + AMP + diphosphate + H(+). This Thermosipho melanesiensis (strain DSM 12029 / CIP 104789 / BI429) protein is Histidine--tRNA ligase.